We begin with the raw amino-acid sequence, 237 residues long: MPRIKICGIRTGEEARWAVEAGADALGFIFVPHSKRYIQPETAREIILNLPPLISKVGVFAQASPEHVGRIVHECSLDTIQLHGNEDPRLYRHLSVTKIKAFSFPSAPAPGNSSEAAPDFSLVETSPSSSLPTSFRELPPASLHGILLDSSAGGRTGGTGIPLPWHTPVFQDFLHQVGDLGYPLILAGGLNPDNILEAIRLTRPYGVDVSSGVERNGRKDREKIQHFISQARKESPL.

The protein belongs to the TrpF family.

The catalysed reaction is N-(5-phospho-beta-D-ribosyl)anthranilate = 1-(2-carboxyphenylamino)-1-deoxy-D-ribulose 5-phosphate. The protein operates within amino-acid biosynthesis; L-tryptophan biosynthesis; L-tryptophan from chorismate: step 3/5. This is N-(5'-phosphoribosyl)anthranilate isomerase from Desulfitobacterium hafniense (strain Y51).